A 155-amino-acid chain; its full sequence is uncharacterized protein (155 aa).

Disordered regions lie at residues 1–22 (MSSQ…TFTF) and 110–155 (NKEP…DTQA). Position 2 is an N-acetylserine (serine 2). Residues serine 136, serine 144, and serine 146 each carry the phosphoserine modification. Acidic residues predominate over residues 136 to 155 (SDEDLDAESDSDGEDGDTQA).

This is an uncharacterized protein from Mus musculus (Mouse).